Consider the following 235-residue polypeptide: Phosphoribosylaminoimidazole-succinocarboxamide synthase (235 aa).

This sequence belongs to the SAICAR synthetase family.

The catalysed reaction is 5-amino-1-(5-phospho-D-ribosyl)imidazole-4-carboxylate + L-aspartate + ATP = (2S)-2-[5-amino-1-(5-phospho-beta-D-ribosyl)imidazole-4-carboxamido]succinate + ADP + phosphate + 2 H(+). The protein operates within purine metabolism; IMP biosynthesis via de novo pathway; 5-amino-1-(5-phospho-D-ribosyl)imidazole-4-carboxamide from 5-amino-1-(5-phospho-D-ribosyl)imidazole-4-carboxylate: step 1/2. The protein is Phosphoribosylaminoimidazole-succinocarboxamide synthase of Prosthecochloris aestuarii (strain DSM 271 / SK 413).